The chain runs to 186 residues: Protein C (186 aa).

Polar residues predominate over residues 1–12; it reads MSKTDWNASGPS. Residues 1–43 form a disordered region; sequence MSKTDWNASGPSRPSPSAHWPSGKLWQHGQKYQTTQDRSRPPA.

This sequence belongs to the morbillivirus protein C family. In terms of assembly, interacts with the phosphoprotein (via C-terminus); this interaction allows C to associate with the ribonucleocapsid.

The protein localises to the host nucleus. It is found in the host cytoplasmic vesicle. In terms of biological role, ribonucleocapsid-associated protein that interacts with the phosphoprotein (P), thereby increasing replication accuracy and processivity of the polymerase complex. This chain is Protein C (P/V/C), found in Homo sapiens (Human).